The sequence spans 204 residues: Threonylcarbamoyl-AMP synthase (204 aa).

The region spanning 10 to 204 is the YrdC-like domain; it reads ADELDLVANY…KDLLAGHILR (195 aa).

It belongs to the SUA5 family. TsaC subfamily.

The protein resides in the cytoplasm. It catalyses the reaction L-threonine + hydrogencarbonate + ATP = L-threonylcarbamoyladenylate + diphosphate + H2O. Functionally, required for the formation of a threonylcarbamoyl group on adenosine at position 37 (t(6)A37) in tRNAs that read codons beginning with adenine. Catalyzes the conversion of L-threonine, HCO(3)(-)/CO(2) and ATP to give threonylcarbamoyl-AMP (TC-AMP) as the acyladenylate intermediate, with the release of diphosphate. In Moraxella catarrhalis (strain BBH18), this protein is Threonylcarbamoyl-AMP synthase.